A 144-amino-acid polypeptide reads, in one-letter code: Small ribosomal subunit protein uS12 (144 aa).

A 3-methylthioaspartic acid modification is found at Asp-103. Residues 121–144 form a disordered region; sequence VANRKQGRSKYGTKKASAVPAKKK.

The protein belongs to the universal ribosomal protein uS12 family. In terms of assembly, part of the 30S ribosomal subunit. Contacts proteins S8 and S17. May interact with IF1 in the 30S initiation complex.

Functionally, with S4 and S5 plays an important role in translational accuracy. In terms of biological role, interacts with and stabilizes bases of the 16S rRNA that are involved in tRNA selection in the A site and with the mRNA backbone. Located at the interface of the 30S and 50S subunits, it traverses the body of the 30S subunit contacting proteins on the other side and probably holding the rRNA structure together. The combined cluster of proteins S8, S12 and S17 appears to hold together the shoulder and platform of the 30S subunit. The chain is Small ribosomal subunit protein uS12 from Roseiflexus castenholzii (strain DSM 13941 / HLO8).